We begin with the raw amino-acid sequence, 362 residues long: Chalcone synthase A (362 aa).

Cys168 is a catalytic residue.

Belongs to the thiolase-like superfamily. Chalcone/stilbene synthases family.

It carries out the reaction (E)-4-coumaroyl-CoA + 3 malonyl-CoA + 3 H(+) = 2',4,4',6'-tetrahydroxychalcone + 3 CO2 + 4 CoA. The protein operates within secondary metabolite biosynthesis; flavonoid biosynthesis. Its function is as follows. The primary product of this enzyme is 4,2',4',6'-tetrahydroxychalcone (also termed naringenin-chalcone or chalcone) which can under specific conditions spontaneously isomerize into naringenin. This chain is Chalcone synthase A (CHSA), found in Ipomoea platensis (Morning glory).